The sequence spans 542 residues: Zinc finger protein 280A (542 aa).

The segment at 66 to 185 (VTPGSNSRRK…RDSKRVKLRD (120 aa)) is disordered. Residues 107–122 (EGRSTDSPVTMKSSSE) show a composition bias toward polar residues. Positions 128–143 (SSPQVVSPSSSDSLPP) are enriched in low complexity. Positions 161–185 (SSPDSKRLSTSDINSRDSKRVKLRD) are enriched in basic and acidic residues. C2H2-type zinc fingers lie at residues 334–357 (TTCQ…DSVH), 364–387 (AVCK…KDHH), 423–445 (LLCL…CWRH), and 451–474 (LQCS…TKDH). The segment covering 499–520 (QPGSSGMASVIVSNTDPQSSPV) has biased composition (polar residues). The interval 499–542 (QPGSSGMASVIVSNTDPQSSPVKTKKKTAMNTRDSRLPCSKDSS) is disordered.

It is found in the nucleus. Functionally, may function as a transcription factor. The protein is Zinc finger protein 280A (ZNF280A) of Homo sapiens (Human).